Consider the following 430-residue polypeptide: Enolase (430 aa).

Position 167 (Gln167) interacts with (2R)-2-phosphoglycerate. Glu209 serves as the catalytic Proton donor. Residues Asp246, Glu287, and Asp314 each contribute to the Mg(2+) site. Residues Lys339, Arg368, Ser369, and Lys390 each coordinate (2R)-2-phosphoglycerate. The active-site Proton acceptor is Lys339.

The protein belongs to the enolase family. Mg(2+) is required as a cofactor.

The protein resides in the cytoplasm. The protein localises to the secreted. Its subcellular location is the cell surface. It carries out the reaction (2R)-2-phosphoglycerate = phosphoenolpyruvate + H2O. Its pathway is carbohydrate degradation; glycolysis; pyruvate from D-glyceraldehyde 3-phosphate: step 4/5. Functionally, catalyzes the reversible conversion of 2-phosphoglycerate (2-PG) into phosphoenolpyruvate (PEP). It is essential for the degradation of carbohydrates via glycolysis. This Prochlorococcus marinus (strain MIT 9515) protein is Enolase.